Here is a 184-residue protein sequence, read N- to C-terminus: Large ribosomal subunit protein uL5 (184 aa).

This sequence belongs to the universal ribosomal protein uL5 family. In terms of assembly, part of the 50S ribosomal subunit; part of the 5S rRNA/L5/L18/L25 subcomplex. Contacts the 5S rRNA and the P site tRNA. Forms a bridge to the 30S subunit in the 70S ribosome.

Functionally, this is one of the proteins that bind and probably mediate the attachment of the 5S RNA into the large ribosomal subunit, where it forms part of the central protuberance. In the 70S ribosome it contacts protein S13 of the 30S subunit (bridge B1b), connecting the 2 subunits; this bridge is implicated in subunit movement. Contacts the P site tRNA; the 5S rRNA and some of its associated proteins might help stabilize positioning of ribosome-bound tRNAs. The polypeptide is Large ribosomal subunit protein uL5 (Pelagibacter ubique (strain HTCC1062)).